Reading from the N-terminus, the 528-residue chain is Glutamate--cysteine ligase (528 aa).

Belongs to the glutamate--cysteine ligase type 1 family. Type 1 subfamily.

The enzyme catalyses L-cysteine + L-glutamate + ATP = gamma-L-glutamyl-L-cysteine + ADP + phosphate + H(+). The protein operates within sulfur metabolism; glutathione biosynthesis; glutathione from L-cysteine and L-glutamate: step 1/2. The polypeptide is Glutamate--cysteine ligase (Janthinobacterium sp. (strain Marseille) (Minibacterium massiliensis)).